Reading from the N-terminus, the 138-residue chain is uncharacterized protein (138 aa).

The interval 74-96 is disordered; the sequence is RRRSPSLPARRPPTPREDALEDY. Positions 87–96 are enriched in basic and acidic residues; the sequence is TPREDALEDY.

This is an uncharacterized protein from Orgyia pseudotsugata (Douglas-fir tussock moth).